We begin with the raw amino-acid sequence, 476 residues long: Serine/threonine-protein kinase Chk1 (476 aa).

The Protein kinase domain occupies 9–265 (WDLVQTLGEG…IPDIKKDRWY (257 aa)). Residues 15–23 (LGEGAYGEV) and K38 contribute to the ATP site. The Proton acceptor role is filled by D130. The disordered stretch occupies residues 272-329 (GTKRGRVSSGGVTESPGALPKHIRSDTDFSPVKSALGEDKASYSTSQPEPGTGGALWD). S280 is subject to Phosphoserine; by PKB/AKT1. S296 carries the post-translational modification Phosphoserine. S317 is subject to Phosphoserine; by ATM and ATR. Residue S345 is modified to Phosphoserine. An autoinhibitory region region spans residues 391-476 (RSLRDVCEKM…STQKVWLPPP (86 aa)).

Belongs to the protein kinase superfamily. CAMK Ser/Thr protein kinase family. NIM1 subfamily. Phosphorylated by ATR in a RAD17-dependent manner in response to ultraviolet irradiation and inhibition of DNA replication. Phosphorylated by ATM in response to ionizing irradiation. Phosphorylation at Ser-345 induces a change in the conformation of the protein and activates the kinase activity. Phosphorylation at Ser-345 also increases binding to 14-3-3 proteins and promotes nuclear retention.

It is found in the nucleus. The protein localises to the chromosome. The protein resides in the cytoplasm. Its subcellular location is the cytoskeleton. It localises to the microtubule organizing center. It is found in the centrosome. The catalysed reaction is L-seryl-[protein] + ATP = O-phospho-L-seryl-[protein] + ADP + H(+). The enzyme catalyses L-threonyl-[protein] + ATP = O-phospho-L-threonyl-[protein] + ADP + H(+). Activated through phosphorylation by atr or atm in response to DNA damage or inhibition of DNA replication. Functionally, serine/threonine-protein kinase which is required for checkpoint-mediated cell cycle arrest and activation of DNA repair in response to the presence of DNA damage or unreplicated DNA. May also negatively regulate cell cycle progression during unperturbed cell cycles. This regulation is achieved by a number of mechanisms that together help to preserve the integrity of the genome. Recognizes the substrate consensus sequence [R-X-X-S/T]. Binds to and phosphorylates CDC25A, CDC25B and CDC25C. This inhibits their activity through proteasomal degradation, nucleo-cytoplasmic shuttling and inhibition by proteins of the 13-3-3 family. Inhibition of CDC25 leads to increased inhibitory tyrosine phosphorylation of CDK-cyclin complexes and blocks cell cycle progression. May promote DNA repair, regulate chromatin assembly and the transcription of genes that regulate cell-cycle progression. May also play a role in replication fork maintenance. This is Serine/threonine-protein kinase Chk1 (CHEK1) from Gallus gallus (Chicken).